Consider the following 600-residue polypeptide: MPAVGDQHKLIANPFEEPQRRISEYTAQEIATLQSRLEKQLGPEYLSSRAGPSGQKVHYISSEKCIQLANEVFGFNGWSSSIQNIQVDFVDEHPQTLKINMGISVIMRVTLRDGTYHEDLGYGHIENCKGKAAAFEKAKKEATTDALKRALRQFGNVLGNCIYDKQYLAKVTKMKVEPTKFAEDNLHRHSDFVKKEPVEADIMKVDSVGAGARPPALGNEESFEDLLGELDEADFNMADEGHPDEVVLPQAVHNSLNDKPVHQQLTNLNPQAQQSRPLSRSGSTGSLNTRQQPQNSHQFTARAQSRPPQQQLNSNQSRPMGQPVNNSSNANTPNNPQNYTTPQKPAPAAPAPQAGAAVAPAPETVGFFSAKAVTQLPEEALASGQVAPKPGLAFNPHAESPSIRKTPGIDHTKSKPLARNGQHVPPAKTTETEAEPSTSLSRPAGAHAASRPVTMNEARSASGSFSRAGPPMGGNAGNMGKPNVVNPQLDHTRRIGAPGMSGFSSSPSTNRGQYRPLTMKRPAPVVGGGAGQTKDGNGDSATTTTIAANTTAGSATGGNAAPSAGNGGRVPLTDMSANASNATAAGAATSGPEVKRQRLA.

The DNA-binding element occupies 148-152; that stretch reads KRALR. The span at 268–319 shows a compositional bias: polar residues; the sequence is LNPQAQQSRPLSRSGSTGSLNTRQQPQNSHQFTARAQSRPPQQQLNSNQSRP. Disordered regions lie at residues 268 to 357 and 387 to 600; these read LNPQ…AGAA and APKP…QRLA. 2 stretches are compositionally biased toward low complexity: residues 325–343 and 458–470; these read NNSSNANTPNNPQNYTTPQ and ARSASGSFSRAGP. Positions 502–512 are enriched in polar residues; sequence GFSSSPSTNRG. Low complexity-rich tracts occupy residues 540 to 564 and 577 to 591; these read SATTTTIAANTTAGSATGGNAAPSA and ANASNATAAGAATSG.

It belongs to the RAD52 family. Part of a complex that includes mei-3/rad51 and mus-11/rad52.

It is found in the nucleus. In terms of biological role, involved in DNA double-strand break (DSB) repair and recombination. Promotes the annealing of complementary single-stranded DNA and by stimulation of the mei-3/rad51 recombinase. This Neurospora crassa (strain ATCC 24698 / 74-OR23-1A / CBS 708.71 / DSM 1257 / FGSC 987) protein is DNA repair and recombination protein mus-11 (mus-11).